Here is a 429-residue protein sequence, read N- to C-terminus: 26S proteasome regulatory subunit RPN7 (429 aa).

Residues serine 8 and serine 77 each carry the phosphoserine modification. One copy of the TPR repeat lies at 131-164; the sequence is AQAWINLGEYYAQIGDKDNAEKTLGKSLSKAIST. The PCI domain maps to 223 to 395; the sequence is NFKEAAKLLV…GIVETNRPDN (173 aa).

In terms of assembly, the 26S proteasome is composed of a core protease, known as the 20S proteasome, capped at one or both ends by the 19S regulatory complex (RC). The RC is composed of at least 18 different subunits in two subcomplexes, the base and the lid, which form the portions proximal and distal to the 20S proteolytic core, respectively. Component of the lid subcomplex of the 19S RC.

It is found in the nucleus. Component of the 19S cap proteasome complex which acts as a regulatory subunit of the 26S proteasome, involved in the ATP-dependent degradation of ubiquitinated proteins. The polypeptide is 26S proteasome regulatory subunit RPN7 (Saccharomyces cerevisiae (strain ATCC 204508 / S288c) (Baker's yeast)).